Consider the following 552-residue polypeptide: MDRGAVVGFLLGVCVVSCLAGTPKTSWRRVSVGEDVSLLPAPGPTGRGPTQKLLWAVEPLDGCGPLHPSWXSLMPPKQVPETVVDAACMRAPVPLAMAYAPPAPSATGGLRTDFVWQERAAVVNRSLVIYGVRETDSGLYTLSVGDIKDPARQVASVVLVVQPAPVPTPPPTPADYDEDDNDEGEGEDESLAGTPASGTPRLPPPPAPPRSWPSAPEVSHVRGVTVRMETPEAILFSPGEAFSTNVSIHAIAHDDQTYTMDVVWLRFDVPTSCAEMRIYESCLYHPQLPECLSPADAPCAASTWTSRLAVRSYAGCSRTNPPPRCSAEAHMEPVPGLAWQAASVNLEFRDASPQHSGLYLCVVYVNDHIHAWGHITISTAAXYRNAVVEQPLPQRGADLAEPTHPHVGAPPHAPPTHGALRLGAVMGAALLLSVLGLSVWACMTCWRRRAWRAVKSRASGKGPTYIRVADSELYADWSSDSEGERDQVPWLAPPERPDSPSTNGSGFEILSPTAPSVYPRSDGHQSRRQLTTFGSGRPDRRYSQASDSSVFW.

Residues M1–A20 form the signal peptide. The Virion surface portion of the chain corresponds to G21–R421. An interaction with gI region spans residues C63–C88. N124 carries an N-linked (GlcNAc...) asparagine; by host glycan. The disordered stretch occupies residues Q162–P216. Positions A164 to P173 are enriched in pro residues. The segment covering D175–S190 has biased composition (acidic residues). The residue at position 176 (Y176) is a Sulfotyrosine; by host. Over residues R201–S211 the composition is skewed to pro residues. A fc-binding region spans residues S237–X382. An N-linked (GlcNAc...) asparagine; by host glycan is attached at N245. Intrachain disulfides connect C273–C299, C282–C291, and C316–C325. The disordered stretch occupies residues G396 to P415. The segment covering P405–P415 has biased composition (low complexity). The helical transmembrane segment at L422–C442 threads the bilayer. Topologically, residues M443–W552 are intravirion. 2 consecutive short sequence motifs (internalization motif) follow at residues Y465–V468 and Y474–W477. An interaction with VP22 and UL11 region spans residues E472 to P497. Phosphoserine; by host CK2 occurs at positions 478 and 479. An acidic region spans residues S478 to D486. The interval S478–W552 is disordered. S505 is modified (phosphoserine). Residues S543–W552 show a composition bias toward polar residues.

It belongs to the alphaherpesvirinae glycoprotein E family. As to quaternary structure, interacts with gI; this interaction enhances the Fc receptor function of gE. The heterodimer gE/gI interacts with the Fc part of host IgG. Interacts (via C-terminus) with VP22 tegument protein; this interaction is necessary for the recruitment of VP22 to the Golgi and its packaging into virions. Interacts (via C-terminus) with UL11 tegument protein. Post-translationally, phosphorylated on serines within the acidic cluster. Phosphorylation determines whether endocytosed viral gE traffics to the trans-Golgi network or recycles to the cell membrane. N-glycosylated, and sulfated.

It localises to the virion membrane. It is found in the host cell membrane. Its subcellular location is the host cell junction. The protein resides in the host Golgi apparatus. The protein localises to the host trans-Golgi network. In epithelial cells, the heterodimer gE/gI is required for the cell-to-cell spread of the virus, by sorting nascent virions to cell junctions. Once the virus reaches the cell junctions, virus particles can spread to adjacent cells extremely rapidly through interactions with cellular receptors that accumulate at these junctions. Implicated in basolateral spread in polarized cells. In neuronal cells, gE/gI is essential for the anterograde spread of the infection throughout the host nervous system. Together with US9, the heterodimer gE/gI is involved in the sorting and transport of viral structural components toward axon tips. Its function is as follows. The heterodimer gE/gI serves as a receptor for the Fc part of host IgG. Dissociation of gE/gI from IgG occurs at acidic pH. May thus be involved in anti-HSV antibodies bipolar bridging, followed by intracellular endocytosis and degradation, thereby interfering with host IgG-mediated immune responses. In Human herpesvirus 1 (strain F) (HHV-1), this protein is Envelope glycoprotein E (gE).